Here is a 232-residue protein sequence, read N- to C-terminus: E3 ubiquitin-protein ligase RNF125 (232 aa).

The segment covering 1–10 has biased composition (polar residues); it reads MGSVLSSDSG. Positions 1 to 27 are disordered; that stretch reads MGSVLSSDSGKSAPPSATPRALERRGD. Gly2 is lipidated: N-myristoyl glycine. Residues Cys37 and Cys40 each contribute to the Zn(2+) site. The RING-type zinc finger occupies 37–76; it reads CAVCLEVLHQPVRTRCGHVFCRSCIATSLKNNKWTCPYCR. The interaction with the C2HC RNF-type zinc finger stretch occupies residues 43–45; that stretch reads VLH. Positions 52, 54, 57, 60, 72, 75, 100, and 103 each coordinate Zn(2+). The C2HC RNF-type zinc-finger motif lies at 100-119; the sequence is CAECDTLVCLGEMRAHIRTC. The tract at residues 109–113 is interaction with the RING-type zinc finger; that stretch reads LGEMR. Zn(2+) is bound by residues His115 and Cys119. The tract at residues 120-128 is linker region; that stretch reads QKYIDKYGP. The required for interaction with ubiquitin and for autoubiquitination stretch occupies residues 210 to 224; it reads EEALIRRVLDRSLLE.

Interacts with UBE2D1. Interacts with VCP/p97; leading to recruit RNF125 to RIGI and promote ubiquitination of RIGI. Autoubiquitinated, leading to its subsequent proteasomal degradation.

The protein resides in the golgi apparatus membrane. It carries out the reaction S-ubiquitinyl-[E2 ubiquitin-conjugating enzyme]-L-cysteine + [acceptor protein]-L-lysine = [E2 ubiquitin-conjugating enzyme]-L-cysteine + N(6)-ubiquitinyl-[acceptor protein]-L-lysine.. It functions in the pathway protein modification; protein ubiquitination. In terms of biological role, E3 ubiquitin-protein ligase that mediates ubiquitination and subsequent proteasomal degradation of target proteins, such as RIGI, MAVS/IPS1, IFIH1/MDA5, JAK1 and p53/TP53. Acts as a negative regulator of type I interferon production by mediating ubiquitination of RIGI at 'Lys-181', leading to RIGI degradation. Mediates ubiquitination and subsequent degradation of p53/TP53. Mediates ubiquitination and subsequent degradation of JAK1. Acts as a positive regulator of T-cell activation. This is E3 ubiquitin-protein ligase RNF125 (RNF125) from Macaca fascicularis (Crab-eating macaque).